A 260-amino-acid polypeptide reads, in one-letter code: 3-methyl-2-oxobutanoate hydroxymethyltransferase (260 aa).

Mg(2+)-binding residues include Asp-42 and Asp-81. Residues 42–43 (DS), Asp-81, and Lys-109 contribute to the 3-methyl-2-oxobutanoate site. Residue Glu-111 participates in Mg(2+) binding. Glu-178 functions as the Proton acceptor in the catalytic mechanism.

This sequence belongs to the PanB family. Homodecamer; pentamer of dimers. The cofactor is Mg(2+).

It is found in the cytoplasm. The enzyme catalyses 3-methyl-2-oxobutanoate + (6R)-5,10-methylene-5,6,7,8-tetrahydrofolate + H2O = 2-dehydropantoate + (6S)-5,6,7,8-tetrahydrofolate. It participates in cofactor biosynthesis; (R)-pantothenate biosynthesis; (R)-pantoate from 3-methyl-2-oxobutanoate: step 1/2. Catalyzes the reversible reaction in which hydroxymethyl group from 5,10-methylenetetrahydrofolate is transferred onto alpha-ketoisovalerate to form ketopantoate. In Ruthia magnifica subsp. Calyptogena magnifica, this protein is 3-methyl-2-oxobutanoate hydroxymethyltransferase.